Reading from the N-terminus, the 381-residue chain is Cytochrome b (381 aa).

4 helical membrane-spanning segments follow: residues 34 to 54 (FGSL…FLAM), 78 to 99 (WLIR…YLHI), 114 to 134 (WNTG…GYVL), and 179 to 199 (FFTF…VHLL). Heme b is bound by residues His84 and His98. Residues His183 and His197 each contribute to the heme b site. His202 provides a ligand contact to a ubiquinone. Helical transmembrane passes span 227–247 (YKDL…TLFS), 289–309 (LGGV…PTLH), 321–341 (LTQI…WIGG), and 348–368 (FIII…LLMP).

Belongs to the cytochrome b family. The cytochrome bc1 complex contains 3 respiratory subunits (MT-CYB, CYC1 and UQCRFS1), 2 core proteins (UQCRC1 and UQCRC2) and probably 6 low-molecular weight proteins. The cofactor is heme b.

Its subcellular location is the mitochondrion inner membrane. Its function is as follows. Component of the ubiquinol-cytochrome c reductase complex (complex III or cytochrome b-c1 complex) that is part of the mitochondrial respiratory chain. The b-c1 complex mediates electron transfer from ubiquinol to cytochrome c. Contributes to the generation of a proton gradient across the mitochondrial membrane that is then used for ATP synthesis. The sequence is that of Cytochrome b (MT-CYB) from Chelonia mydas (Green sea-turtle).